The sequence spans 104 residues: Pole-localizer protein TmaR (104 aa).

Coiled coils occupy residues 7-34 (IVNQ…NRKR) and 76-96 (SAEI…LTEE).

This sequence belongs to the pole-localizer TmaR family.

The protein localises to the cytoplasm. Functionally, pole-localizer protein involved in the regulation of several cellular processes. This Vibrio atlanticus (strain LGP32) (Vibrio splendidus (strain Mel32)) protein is Pole-localizer protein TmaR.